Here is a 339-residue protein sequence, read N- to C-terminus: Glycerol-3-phosphate dehydrogenase [NAD(P)+] (339 aa).

The NADPH site is built by Ser15, Tyr16, His36, and Lys110. Sn-glycerol 3-phosphate-binding residues include Lys110, Gly139, and Thr141. Ala143 contacts NADPH. Residues Lys195, Asp248, Ser258, Arg259, and Asn260 each contribute to the sn-glycerol 3-phosphate site. Lys195 (proton acceptor) is an active-site residue. Arg259 contacts NADPH. NADPH contacts are provided by Val283 and Glu285.

It belongs to the NAD-dependent glycerol-3-phosphate dehydrogenase family.

Its subcellular location is the cytoplasm. The catalysed reaction is sn-glycerol 3-phosphate + NAD(+) = dihydroxyacetone phosphate + NADH + H(+). The enzyme catalyses sn-glycerol 3-phosphate + NADP(+) = dihydroxyacetone phosphate + NADPH + H(+). It participates in membrane lipid metabolism; glycerophospholipid metabolism. Its function is as follows. Catalyzes the reduction of the glycolytic intermediate dihydroxyacetone phosphate (DHAP) to sn-glycerol 3-phosphate (G3P), the key precursor for phospholipid synthesis. The chain is Glycerol-3-phosphate dehydrogenase [NAD(P)+] from Citrobacter koseri (strain ATCC BAA-895 / CDC 4225-83 / SGSC4696).